A 285-amino-acid polypeptide reads, in one-letter code: MFDKARLPYVALDVLCVVLAGLPFAILTSRHTPFQRGIFCNDESIKYPYKEDTIPYALLGGIMIPFSIVVMIIGETLSVYCNLLHSNSFIRNNYIATIYKSIGTFLFGAAASQSLTDIAKYSIGRLRPHFLSVCDPDWSKVNCSDGYIEYYVCRGNAEKVKEGRLSFYSGHSSFSMYCMVFVALYLQARMKGDWARLLRPTLQFGLVAASIYVGLSRISDYKHHWSDVLTGLIQGAIVAILVAVYVSDFFKARNSPFQERKEEDSHTTLHETPTAGNHYRSNHQP.

At 1–6 the chain is on the cytoplasmic side; the sequence is MFDKAR. The PDZ-binding; involved in localization to the apical cell membrane motif lies at 5–7; that stretch reads ARL. Residues 7 to 27 form a helical membrane-spanning segment; that stretch reads LPYVALDVLCVVLAGLPFAIL. At 28–53 the chain is on the extracellular side; that stretch reads TSRHTPFQRGIFCNDESIKYPYKEDT. A helical transmembrane segment spans residues 54 to 74; sequence IPYALLGGIMIPFSIVVMIIG. Over 75 to 94 the chain is Cytoplasmic; that stretch reads ETLSVYCNLLHSNSFIRNNY. The helical transmembrane segment at 95–115 threads the bilayer; it reads IATIYKSIGTFLFGAAASQSL. The Extracellular segment spans residues 116-165; that stretch reads TDIAKYSIGRLRPHFLSVCDPDWSKVNCSDGYIEYYVCRGNAEKVKEGRL. A phosphatase sequence motif I region spans residues 120 to 128; sequence KYSIGRLRP. A glycan (N-linked (GlcNAc...) asparagine) is linked at Asn-142. Residues 166–186 form a helical membrane-spanning segment; sequence SFYSGHSSFSMYCMVFVALYL. The segment at 168 to 171 is phosphatase sequence motif II; it reads YSGH. Catalysis depends on His-171, which acts as the Proton donors. Residues 187–199 lie on the Cytoplasmic side of the membrane; sequence QARMKGDWARLLR. A helical membrane pass occupies residues 200 to 220; sequence PTLQFGLVAASIYVGLSRISD. The phosphatase sequence motif III stretch occupies residues 216–227; sequence SRISDYKHHWSD. Over 221–229 the chain is Extracellular; that stretch reads YKHHWSDVL. Catalysis depends on His-223, which acts as the Nucleophile. The chain crosses the membrane as a helical span at residues 230 to 250; sequence TGLIQGAIVAILVAVYVSDFF. At 251 to 285 the chain is on the cytoplasmic side; it reads KARNSPFQERKEEDSHTTLHETPTAGNHYRSNHQP. Over residues 260 to 269 the composition is skewed to basic and acidic residues; that stretch reads RKEEDSHTTL. Residues 260 to 285 form a disordered region; that stretch reads RKEEDSHTTLHETPTAGNHYRSNHQP.

This sequence belongs to the PA-phosphatase related phosphoesterase family. As to quaternary structure, forms functional homodimers and homooligomers that are not required for substrate recognition and catalytic activity. Can also form heterooligomers with PLPP2 and PLPP3. In terms of processing, N-glycosylated. N-linked sugars are of the complex type. N-glycosylation is not required for the phosphatase activity.

Its subcellular location is the cell membrane. It localises to the apical cell membrane. The protein localises to the membrane raft. The protein resides in the membrane. It is found in the caveola. It carries out the reaction a 1,2-diacyl-sn-glycero-3-phosphate + H2O = a 1,2-diacyl-sn-glycerol + phosphate. It catalyses the reaction 1,2-dihexadecanoyl-sn-glycero-3-phosphate + H2O = 1,2-dihexadecanoyl-sn-glycerol + phosphate. The enzyme catalyses 1,2-di-(9Z-octadecenoyl)-sn-glycero-3-phosphate + H2O = 1,2-di-(9Z-octadecenoyl)-sn-glycerol + phosphate. The catalysed reaction is a monoacyl-sn-glycero-3-phosphate + H2O = a monoacylglycerol + phosphate. It carries out the reaction (9Z)-octadecenoyl-sn-glycero-3-phosphate + H2O = (9Z-octadecenoyl)-glycerol + phosphate. It catalyses the reaction a 1-acyl-sn-glycero-3-phosphate + H2O = a 1-acyl-sn-glycerol + phosphate. The enzyme catalyses 1-(9Z-octadecenoyl)-sn-glycero-3-phosphate + H2O = 1-(9Z-octadecenoyl)-sn-glycerol + phosphate. The catalysed reaction is a 1,2-diacyl-sn-glycerol 3-diphosphate + H2O = a 1,2-diacyl-sn-glycero-3-phosphate + phosphate + H(+). It carries out the reaction sphing-4-enine 1-phosphate + H2O = sphing-4-enine + phosphate. It catalyses the reaction an N-acylsphing-4-enine 1-phosphate + H2O = an N-acylsphing-4-enine + phosphate. The enzyme catalyses N-(octanoyl)-sphing-4-enine-1-phosphate + H2O = N-octanoylsphing-4-enine + phosphate. The catalysed reaction is N-(9Z-octadecenoyl)-ethanolamine phosphate + H2O = N-(9Z-octadecenoyl) ethanolamine + phosphate. It carries out the reaction 1-hexadecanoyl-2-(9Z-octadecenoyl)-sn-glycero-3-phosphate + H2O = 1-hexadecanoyl-2-(9Z-octadecenoyl)-sn-glycerol + phosphate. Its pathway is lipid metabolism; phospholipid metabolism. With respect to regulation, magnesium-independent phospholipid phosphatase. Insensitive to N-ethylmaleimide. In terms of biological role, magnesium-independent phospholipid phosphatase of the plasma membrane that catalyzes the dephosphorylation of a variety of glycerolipid and sphingolipid phosphate esters including phosphatidate/PA, lysophosphatidate/LPA, diacylglycerol pyrophosphate/DGPP, sphingosine 1-phosphate/S1P and ceramide 1-phosphate/C1P. Also acts on N-oleoyl ethanolamine phosphate/N-(9Z-octadecenoyl)-ethanolamine phosphate, a potential physiological compound. Through its extracellular phosphatase activity allows both the hydrolysis and the cellular uptake of these bioactive lipid mediators from the milieu, regulating signal transduction in different cellular processes. It is for instance essential for the extracellular hydrolysis of S1P and subsequent conversion into intracellular S1P. Involved in the regulation of inflammation, platelets activation, cell proliferation and migration among other processes. May also have an intracellular activity to regulate phospholipid-mediated signaling pathways. This Cavia porcellus (Guinea pig) protein is Phospholipid phosphatase 1.